The sequence spans 711 residues: Ribosomal RNA large subunit methyltransferase K/L (711 aa).

The 112-residue stretch at 43–154 (LGYRITLWSR…RGQITIGLNF (112 aa)) folds into the THUMP domain.

Belongs to the methyltransferase superfamily. RlmKL family.

It is found in the cytoplasm. It carries out the reaction guanosine(2445) in 23S rRNA + S-adenosyl-L-methionine = N(2)-methylguanosine(2445) in 23S rRNA + S-adenosyl-L-homocysteine + H(+). The catalysed reaction is guanosine(2069) in 23S rRNA + S-adenosyl-L-methionine = N(2)-methylguanosine(2069) in 23S rRNA + S-adenosyl-L-homocysteine + H(+). Specifically methylates the guanine in position 2445 (m2G2445) and the guanine in position 2069 (m7G2069) of 23S rRNA. This is Ribosomal RNA large subunit methyltransferase K/L from Shewanella woodyi (strain ATCC 51908 / MS32).